Reading from the N-terminus, the 309-residue chain is Olfactory receptor 8U1 (309 aa).

The Extracellular segment spans residues 1 to 25 (MAHINCTQATEFILVGLTDHQELKM). Asparagine 5 carries an N-linked (GlcNAc...) asparagine glycan. A helical transmembrane segment spans residues 26-46 (PLFVLFLSIYLFTVVGNLGLI). Residues 47–54 (LLIRADTS) lie on the Cytoplasmic side of the membrane. A helical transmembrane segment spans residues 55–75 (LNTPMYFFLSNLAFVDFCYSS). Residues 76–99 (VITPKMLGNFLYKQNVISFDACAT) are Extracellular-facing. Cysteine 97 and cysteine 189 are disulfide-bonded. Residues 100–120 (QLGCFLTFMISESLLLASMAY) form a helical membrane-spanning segment. Residues 121–139 (DRYVAICNPLLYMVVMTPG) are Cytoplasmic-facing. The helical transmembrane segment at 140 to 160 (ICIQLVAVPYSYSFLMALFHT) threads the bilayer. Residues 161–197 (ILTFRLSYCHSNIVNHFYCDDMPLLRLTCSDTRFKQL) lie on the Extracellular side of the membrane. The chain crosses the membrane as a helical span at residues 198–217 (WIFACAGIMFISSLLIVFVS). Residues 218-237 (YMFIISAILRMHSAEGRQKA) lie on the Cytoplasmic side of the membrane. Residues 238-258 (FSTCGSHMLAVTIFYGTLIFM) traverse the membrane as a helical segment. Over 259 to 271 (YLQPSSSHALDTD) the chain is Extracellular. Residues 272–292 (KMASVFYTVIIPMLNPLIYSL) traverse the membrane as a helical segment. At 293–309 (QNKEVKEALKKIIINKN) the chain is on the cytoplasmic side.

Belongs to the G-protein coupled receptor 1 family.

It localises to the cell membrane. Odorant receptor. This is Olfactory receptor 8U1 (OR8U1) from Homo sapiens (Human).